A 1150-amino-acid chain; its full sequence is Voltage-dependent calcium channel subunit alpha-2/delta-2 (1150 aa).

Residues 1–18 (MAVPARTCGASRPGPART) form the signal peptide. The segment at 1-41 (MAVPARTCGASRPGPARTARPWPGCGPHPGPGTRRPTSGPP) is disordered. At 19–1113 (ARPWPGCGPH…TEDTSDCGRG (1095 aa)) the chain is on the extracellular side. One can recognise a VWFA domain in the interval 291-469 (DMVIIVDVSG…INTQEYLDVL (179 aa)). The a divalent metal cation site is built by D297, S299, and S301. Residues 297–301 (DVSGS) carry the MIDAS-like motif motif. 6 N-linked (GlcNAc...) asparagine glycosylation sites follow: N386, N418, N507, N540, N624, and N861. A disulfide bridge links C443 with C1098. Positions 485–574 (WTNVYEDALG…KPQTTNFREP (90 aa)) constitute a Cache domain. The chain crosses the membrane as a helical span at residues 1114 to 1134 (ASFPPSLGVLVSLQLLLLLGL). The Cytoplasmic segment spans residues 1135–1150 (PPRPQPQVLVHASRRL).

Belongs to the calcium channel subunit alpha-2/delta family. In terms of assembly, dimer formed of alpha-2-2 and delta-2 chains; disulfide-linked. Voltage-dependent calcium channels are multisubunit complexes, consisting of alpha-1 (CACNA1), alpha-2 (CACNA2D), beta (CACNB) and delta (CACNA2D) subunits in a 1:1:1:1 ratio. In terms of processing, may be proteolytically processed into subunits alpha-2-2 and delta-2 that are disulfide-linked. It is however unclear whether such cleavage really takes place in vivo and has a functional role. In terms of tissue distribution, predominantly present in cerebellar cortex. Present in various lung tumor cell lines, while it is absent in normal lung (at protein level). Highly expressed in heart, lung, testis, pancreas and skeletal muscle. Also expressed in kidney, liver, placenta and brain.

The protein localises to the membrane. Its function is as follows. The alpha-2/delta subunit of voltage-dependent calcium channels regulates calcium current density and activation/inactivation kinetics of the calcium channel. Acts as a regulatory subunit for P/Q-type calcium channel (CACNA1A), N-type (CACNA1B), L-type (CACNA1C OR CACNA1D) and possibly T-type (CACNA1G). Overexpression induces apoptosis. This Homo sapiens (Human) protein is Voltage-dependent calcium channel subunit alpha-2/delta-2 (CACNA2D2).